The chain runs to 756 residues: MLGQFSPGEPYTTSLSSTPPWSPANQFQLFRFRSRTEPIDWRRLSTLDVDRVARDMDVSVLQDFIMTVTFCALEGERCPNCRGPVDPSLVKLLRMSQLSTEYLLQCQDFLSSQLAGLEERLQAATSLVQQGEGQRAELEKSLQETKQENRRRKQLIATQQLLLQASANNYHKCQFCEKSFVNYSYLQAHVQRRHPEVTDAEKQKKRKVEEMEDGIEELKEKLRLTQMQLQEEQQADNLRRQQEQEQQRRREQSEKEALERWKEDERRKFNQEIADLRQLFLQESKEMASKSSSIEAKLLVLQNKEMAGFNNASLQQDSDPEKEMRENRERELRERIARKKSEWRRKFQEAQKRHQQENKELKSENSRLLKALSVEKNSTSSVQKLQQQVVSLSSQLSQKDRLIKSQEEKIKKLSATPVPVSVVSLNDQDSSEEPVEQDRDSQEDSDEPQWKAPKIRKGKPALMRESKPILEESLEQKLENMGLRKGTKGISKQTFKSLSSLLAGQRLQKFRQQTNLQSLRDSLTLEVTRRVKSLQKSSGKPTPNTLKQRGKKTSTPLNEKSLRFRQDSKASDRREKSQQPKTLLPTPTPRSKAPPPNQTPKILAKKNSTPPFSSDEESVEDTAYITSSRGNLSSSVRVVQSGSLLNPTTEPDWTDSELSEDLDLPKIYKTCNPQGSVVQTLTRSLERQLSTPIKTPVGGTRVLPPSSTTPRPAIVKQQALSGEESDSELSSIEELTGRRAGGHKSLEVDRTSGTSA.

The interval 1–20 (MLGQFSPGEPYTTSLSSTPP) is disordered. Positions 10 to 19 (PYTTSLSSTP) are enriched in low complexity. A coiled-coil region spans residues 108-158 (DFLSSQLAGLEERLQAATSLVQQGEGQRAELEKSLQETKQENRRRKQLIAT). A C2H2-type zinc finger spans residues 171–194 (HKCQFCEKSFVNYSYLQAHVQRRH). Composition is skewed to basic and acidic residues over residues 193-202 (RHPEVTDAEK), 237-262 (NLRR…ERWK), 319-335 (DPEK…LRER), and 344-365 (RRKF…KSEN). 6 disordered regions span residues 193-212 (RHPE…EEME), 233-262 (QQAD…ERWK), 310-365 (NNAS…KSEN), 409-466 (KIKK…MRES), 531-626 (VKSL…AYIT), and 693-756 (IKTP…GTSA). Coiled-coil stretches lie at residues 196–283 (EVTD…FLQE) and 321–416 (EKEM…LSAT). Over residues 534-558 (LQKSSGKPTPNTLKQRGKKTSTPLN) the composition is skewed to polar residues. Over residues 560–578 (KSLRFRQDSKASDRREKSQ) the composition is skewed to basic and acidic residues. A compositionally biased stretch (pro residues) spans 586 to 598 (TPTPRSKAPPPNQ).

This sequence belongs to the DZIP C2H2-type zinc-finger protein family.

It is found in the cytoplasm. The protein resides in the cytoskeleton. It localises to the cilium basal body. The protein localises to the microtubule organizing center. Its subcellular location is the centrosome. It is found in the centriole. Involved in primary cilium formation. Probably acts as a transition zone protein required for localization of PKD1/PC1 and PKD2/PC2 to the ciliary membrane. The chain is Cilium assembly protein DZIP1L (dzip1l) from Danio rerio (Zebrafish).